We begin with the raw amino-acid sequence, 238 residues long: MRPAGRSNNQVRPVTLTRNYTKHAEGSVLVEFGDTKVLCTASIEEGVPRFLKGQGQGWITAEYGMLPRSTHTRNAREAAKGKQGGRTMEIQRLIARALRAAVDLKALGEFTITLDCDVLQADGGTRTASITGACMALADALQKLVENGKLKTNPMKGMVAAVSVGIVNGEAVCDLEYVEDSAAETDMNVVMTEDGRIIEVQGTAEGEPFTHEELLTLLALARGGIESIVATQKAALAN.

Residues Arg86 and Gly124–Arg126 each bind phosphate.

Belongs to the RNase PH family. In terms of assembly, homohexameric ring arranged as a trimer of dimers.

The catalysed reaction is tRNA(n+1) + phosphate = tRNA(n) + a ribonucleoside 5'-diphosphate. Functionally, phosphorolytic 3'-5' exoribonuclease that plays an important role in tRNA 3'-end maturation. Removes nucleotide residues following the 3'-CCA terminus of tRNAs; can also add nucleotides to the ends of RNA molecules by using nucleoside diphosphates as substrates, but this may not be physiologically important. Probably plays a role in initiation of 16S rRNA degradation (leading to ribosome degradation) during starvation. This is Ribonuclease PH from Shigella dysenteriae serotype 1 (strain Sd197).